We begin with the raw amino-acid sequence, 299 residues long: MATTTTRGARDSPFPAPSEGEIKKELNMKGDTISGGSTELSYLKSLVSQLNDKIAQLESKASSTISSITGSTPSGVRMILIGPPGAGKGTQAPKILEKFNNCVCHLATGDMLREQVSKQTELGKMAKKIMDQGGLVSDEIMVSMIKDQLETNPSCKGGFILDGFPRTTPQAEKLDGMLKQKNQKLDHAVELKINDNLLISRITGRLVHPASGRSYHKEFSPPKKPMTDDVTGEPLIQRSDDNAETLKKRLATYHAQTAAVTDYYRKQGIWAPVDASQSPKVVWQSIQAIFDNKQPQPSN.

Residues 1-30 (MATTTTRGARDSPFPAPSEGEIKKELNMKG) are disordered. 85-90 (GAGKGT) serves as a coordination point for ATP. Positions 107–136 (ATGDMLREQVSKQTELGKMAKKIMDQGGLV) are NMP. Residues T108, R113, 134–136 (GLV), 163–166 (GFPR), and Q170 each bind AMP. Positions 204-241 (GRLVHPASGRSYHKEFSPPKKPMTDDVTGEPLIQRSDD) are LID. ATP contacts are provided by residues R205 and 214–215 (SY). Residues 212–237 (GRSYHKEFSPPKKPMTDDVTGEPLIQ) are disordered. Over residues 215–227 (YHKEFSPPKKPMT) the composition is skewed to basic and acidic residues. R238 and R249 together coordinate AMP. Q277 contacts ATP.

The protein belongs to the adenylate kinase family. AK2 subfamily. In terms of assembly, monomer.

The protein resides in the cytoplasm. The protein localises to the cytosol. Its subcellular location is the mitochondrion intermembrane space. It catalyses the reaction AMP + ATP = 2 ADP. Catalyzes the reversible transfer of the terminal phosphate group between ATP and AMP. Plays an important role in cellular energy homeostasis and in adenine nucleotide metabolism. Adenylate kinase activity is critical for regulation of the phosphate utilization and the AMP de novo biosynthesis pathways. This is Adenylate kinase from Mycosarcoma maydis (Corn smut fungus).